The primary structure comprises 179 residues: Large ribosomal subunit protein uL5 (179 aa).

This sequence belongs to the universal ribosomal protein uL5 family. Part of the 50S ribosomal subunit; part of the 5S rRNA/L5/L18/L25 subcomplex. Contacts the 5S rRNA and the P site tRNA. Forms a bridge to the 30S subunit in the 70S ribosome.

In terms of biological role, this is one of the proteins that bind and probably mediate the attachment of the 5S RNA into the large ribosomal subunit, where it forms part of the central protuberance. In the 70S ribosome it contacts protein S13 of the 30S subunit (bridge B1b), connecting the 2 subunits; this bridge is implicated in subunit movement. Contacts the P site tRNA; the 5S rRNA and some of its associated proteins might help stabilize positioning of ribosome-bound tRNAs. The polypeptide is Large ribosomal subunit protein uL5 (Geobacillus thermodenitrificans (strain NG80-2)).